The chain runs to 265 residues: MTSTGPETSETPGATTQRHGFGIDVGGSGIKGGIVDLDTGQLIGDRIKLLTPQPATPLAVAKTIAEVVNGFGWRGPLGVTYPGVVTHGVVRTAANVDKSWIGTNARDTIGAELGGQQVTILNDADAAGLAETRYGAGKNNPGLVVLLTFGTGIGSAVIHNGTLIPNTEFGHLEVGGKEAEERAASSVKEKNDWTYPKWAKQVIRVLIAIENAIWPDLFIAGGGISRKADKWVPLLENRTPVVPAALQNTAGIVGAAMASVADTTH.

Residues Met1–Arg18 are compositionally biased toward polar residues. The disordered stretch occupies residues Met1–Gly22. Asp24 to Gly29 is an ATP binding site.

It belongs to the ROK (NagC/XylR) family. As to quaternary structure, homodimer.

It catalyses the reaction [phosphate](n) + D-glucose = [phosphate](n-1) + D-glucose 6-phosphate + H(+). The catalysed reaction is D-glucose + ATP = D-glucose 6-phosphate + ADP + H(+). In terms of biological role, catalyzes the phosphorylation of glucose using polyphosphate or ATP as the phosphoryl donor. Polyphosphate, rather than ATP, seems to be the major phosphate donor for the enzyme in M.tuberculosis. GTP, UTP and CTP can replace ATP as phosphoryl donor. The chain is Polyphosphate glucokinase (ppgK) from Mycobacterium tuberculosis (strain ATCC 25177 / H37Ra).